The sequence spans 65 residues: Protein translocase subunit SecE (65 aa).

A helical membrane pass occupies residues 44–64 (LVMAVVGLIAYIVQLTTSLII).

The protein belongs to the SecE/SEC61-gamma family. In terms of assembly, component of the Sec protein translocase complex. Heterotrimer consisting of SecY (alpha), SecG (beta) and SecE (gamma) subunits. The heterotrimers can form oligomers, although 1 heterotrimer is thought to be able to translocate proteins. Interacts with the ribosome. May interact with SecDF, and other proteins may be involved.

It localises to the cell membrane. Functionally, essential subunit of the Sec protein translocation channel SecYEG. Clamps together the 2 halves of SecY. May contact the channel plug during translocation. The chain is Protein translocase subunit SecE from Sulfolobus acidocaldarius (strain ATCC 33909 / DSM 639 / JCM 8929 / NBRC 15157 / NCIMB 11770).